A 355-amino-acid polypeptide reads, in one-letter code: S-adenosylmethionine:tRNA ribosyltransferase-isomerase (355 aa).

This sequence belongs to the QueA family. In terms of assembly, monomer.

Its subcellular location is the cytoplasm. It catalyses the reaction 7-aminomethyl-7-carbaguanosine(34) in tRNA + S-adenosyl-L-methionine = epoxyqueuosine(34) in tRNA + adenine + L-methionine + 2 H(+). It functions in the pathway tRNA modification; tRNA-queuosine biosynthesis. Transfers and isomerizes the ribose moiety from AdoMet to the 7-aminomethyl group of 7-deazaguanine (preQ1-tRNA) to give epoxyqueuosine (oQ-tRNA). This chain is S-adenosylmethionine:tRNA ribosyltransferase-isomerase, found in Burkholderia orbicola (strain MC0-3).